Consider the following 260-residue polypeptide: CD40 ligand (260 aa).

The Cytoplasmic portion of the chain corresponds to 1–22 (MIETYSQTAPRSVATGPPVSMK). A helical; Signal-anchor for type II membrane protein membrane pass occupies residues 23-46 (IFMYLLTVFLITQMIGSALFAVYL). Over 47–260 (HRRLDKIEDE…GFTSFGLLKL (214 aa)) the chain is Extracellular. The THD domain maps to 121–260 (IAAHVISEAS…GFTSFGLLKL (140 aa)). Cysteines 177 and 217 form a disulfide. The N-linked (GlcNAc...) asparagine glycan is linked to Asn239.

It belongs to the tumor necrosis factor family. As to quaternary structure, homotrimer. Interacts with CD28. CD40 ligand, soluble form: Exists as either a monomer or a homotrimer. Forms a ternary complex between CD40 and integrins for CD40-CD40LG signaling. Post-translationally, the soluble form derives from the membrane form by proteolytic processing.

It localises to the cell membrane. It is found in the cell surface. The protein localises to the secreted. In terms of biological role, cytokine that acts as a ligand to CD40/TNFRSF5. Costimulates T-cell proliferation and cytokine production. Its cross-linking on T-cells generates a costimulatory signal which enhances the production of IL4 and IL10 in conjunction with the TCR/CD3 ligation and CD28 costimulation. Induces the activation of NF-kappa-B. Induces the activation of kinases MAPK8 and PAK2 in T-cells. Mediates B-cell proliferation in the absence of co-stimulus as well as IgE production in the presence of IL4. Involved in immunoglobulin class switching. Acts as a ligand for integrins, specifically ITGA5:ITGB1 and ITGAV:ITGB3; both integrins and the CD40 receptor are required for activation of CD40-CD40LG signaling, which have cell-type dependent effects, such as B-cell activation, NF-kappa-B signaling and anti-apoptotic signaling. This Canis lupus familiaris (Dog) protein is CD40 ligand (CD40LG).